A 165-amino-acid polypeptide reads, in one-letter code: uncharacterized protein (165 aa).

The disordered stretch occupies residues 28–97 (EASAPSGNPP…QLSQSLEVPT (70 aa)). The segment covering 34 to 47 (GNPPPPPPPPPPPI) has biased composition (pro residues). Polar residues-rich tracts occupy residues 54 to 66 (KSLNSPPNHQLDN) and 73 to 94 (AQHTNKNYTTSNIKTQLSQSLE).

This is an uncharacterized protein from Rickettsia prowazekii (strain Madrid E).